The following is a 190-amino-acid chain: MKLLEDKILKEGILLEGNILKVDSFLNHQMDVKLFNEIGKEFKRRFEGCSINKILTIEASGIGIATIVSQYFDFCPVVFAKKVDAANMDKDTYESKVHSFTKNKTYNVRVSKKYINKGDKILLIDDFLANGCAALGLIDIIKQGGAELIGVGIAIEKGFQKGRKELEKVGAKVESLAILDKIENDKVYFK.

Xanthine-binding residues include L20 and N27. 129–133 is a 5-phospho-alpha-D-ribose 1-diphosphate binding site; that stretch reads ANGCA. K157 provides a ligand contact to xanthine.

The protein belongs to the purine/pyrimidine phosphoribosyltransferase family. Xpt subfamily. Homodimer.

The protein resides in the cytoplasm. It catalyses the reaction XMP + diphosphate = xanthine + 5-phospho-alpha-D-ribose 1-diphosphate. Its pathway is purine metabolism; XMP biosynthesis via salvage pathway; XMP from xanthine: step 1/1. Converts the preformed base xanthine, a product of nucleic acid breakdown, to xanthosine 5'-monophosphate (XMP), so it can be reused for RNA or DNA synthesis. This Clostridium botulinum (strain ATCC 19397 / Type A) protein is Xanthine phosphoribosyltransferase 2.